The sequence spans 515 residues: Cytidine and dCMP deaminase domain-containing protein 1 (515 aa).

Polar residues-rich tracts occupy residues 1-11 and 18-27; these read MKEAGQMQNLE and SVSTQTGSMT. Disordered stretches follow at residues 1–27 and 56–83; these read MKEA…GSMT and RQKS…STDK. The segment covering 60 to 83 has biased composition (basic and acidic residues); sequence QKNEEGKHGPLGDNEEMTRVSTDK. The 99-residue stretch at 71–169 folds into the CMP/dCMP-type deaminase 1 domain; that stretch reads GDNEEMTRVS…SLLTEASSSE (99 aa). The Zn(2+) site is built by His-110, Cys-135, and Cys-138. Positions 272 to 284 match the Nuclear export signal motif; the sequence is NLRQNMKDLILLL. The CMP/dCMP-type deaminase 2 domain occupies 318 to 483; the sequence is EIARHCMVQA…LNPSEAYGLE (166 aa). His-399 lines the Zn(2+) pocket. Glu-401 acts as the Proton donor in catalysis. Zn(2+) is bound by residues Cys-427 and Cys-430. A disordered region spans residues 481–515; that stretch reads GLEQNEPERRENGVLRPVPQKEEQHQDKKLRLGIH. Residues 486 to 515 show a composition bias toward basic and acidic residues; sequence EPERRENGVLRPVPQKEEQHQDKKLRLGIH. The short motif at 489 to 511 is the Bipartite nuclear localization signal element; the sequence is RRENGVLRPVPQKEEQHQDKKLR.

The protein belongs to the cytidine and deoxycytidylate deaminase family. The cofactor is Zn(2+).

Its subcellular location is the cytoplasm. The protein localises to the nucleus. It catalyses the reaction 2'-deoxycytidine + H2O + H(+) = 2'-deoxyuridine + NH4(+). The catalysed reaction is cytidine + H2O + H(+) = uridine + NH4(+). Catalyzes the deamination of cytidine and deoxycytidine into uridine and deoxyuridine, respectively. May play an important role in testicular development and spermatogenesis. This is Cytidine and dCMP deaminase domain-containing protein 1 (CDADC1) from Macaca fascicularis (Crab-eating macaque).